A 1034-amino-acid chain; its full sequence is Presequence protease, mitochondrial (1034 aa).

The N-terminal 26 residues, 1–26, are a transit peptide targeting the mitochondrion; the sequence is MLKTRLKQSRAISRVVRRYACSHPIS. A Zn(2+)-binding site is contributed by His97. Residue Glu100 is the Proton acceptor of the active site. His101 contacts Zn(2+). Glu173 is an active-site residue. Glu198 contributes to the Zn(2+) binding site.

This sequence belongs to the peptidase M16 family. PreP subfamily. In terms of assembly, monomer and homodimer; homodimerization is induced by binding of the substrate. Zn(2+) serves as cofactor.

It is found in the mitochondrion intermembrane space. Its subcellular location is the mitochondrion matrix. Functionally, degrades mitochondrial transit peptides after their cleavage in the intermembrane space or in the matrix, and presequence peptides; clearance of these peptides is required to keep the presequence processing machinery running. Preferentially cleaves the N-terminal side of paired basic amino acid residues. Also degrades other unstructured peptides. May function as an ATP-dependent peptidase as opposed to a metalloendopeptidase. The sequence is that of Presequence protease, mitochondrial (CYM1) from Candida albicans (strain SC5314 / ATCC MYA-2876) (Yeast).